The following is an 85-amino-acid chain: Large ribosomal subunit protein bL27 (85 aa).

This sequence belongs to the bacterial ribosomal protein bL27 family.

The polypeptide is Large ribosomal subunit protein bL27 (Sodalis glossinidius (strain morsitans)).